We begin with the raw amino-acid sequence, 130 residues long: Small ribosomal subunit protein eS17 (130 aa).

It belongs to the eukaryotic ribosomal protein eS17 family.

This chain is Small ribosomal subunit protein eS17 (RPS17), found in Theileria parva (East coast fever infection agent).